Here is a 196-residue protein sequence, read N- to C-terminus: Recombination protein RecR (196 aa).

A C4-type zinc finger spans residues 55-70 (CELCGNLESESPCSIC). In terms of domain architecture, Toprim spans 78 to 173 (DIVCVVEEIT…KLSFLAHGIP (96 aa)).

It belongs to the RecR family.

May play a role in DNA repair. It seems to be involved in an RecBC-independent recombinational process of DNA repair. It may act with RecF and RecO. The sequence is that of Recombination protein RecR from Neorickettsia sennetsu (strain ATCC VR-367 / Miyayama) (Ehrlichia sennetsu).